Reading from the N-terminus, the 702-residue chain is Polyribonucleotide nucleotidyltransferase 2 (702 aa).

The Mg(2+) site is built by Asp-483 and Asp-489. The region spanning 550 to 609 is the KH domain; sequence PQVTKLKVHPDKVREVIGAGGKVINKIIDETGVKINIENDGTIYIAAPDQESARVALEMI. The S1 motif domain occupies 619 to 687; it reads GEVYTGKVIK…PQGKIGLSRK (69 aa).

The protein belongs to the polyribonucleotide nucleotidyltransferase family. Mg(2+) serves as cofactor.

The protein resides in the cytoplasm. It carries out the reaction RNA(n+1) + phosphate = RNA(n) + a ribonucleoside 5'-diphosphate. Functionally, involved in mRNA degradation. Catalyzes the phosphorolysis of single-stranded polyribonucleotides processively in the 3'- to 5'-direction. The chain is Polyribonucleotide nucleotidyltransferase 2 from Alkaliphilus metalliredigens (strain QYMF).